The primary structure comprises 384 residues: DNA replication and repair protein RecF (384 aa).

Residue 30-37 (GNNAQGKS) participates in ATP binding.

Belongs to the RecF family.

It localises to the cytoplasm. Its function is as follows. The RecF protein is involved in DNA metabolism; it is required for DNA replication and normal SOS inducibility. RecF binds preferentially to single-stranded, linear DNA. It also seems to bind ATP. The sequence is that of DNA replication and repair protein RecF from Gloeothece citriformis (strain PCC 7424) (Cyanothece sp. (strain PCC 7424)).